Here is a 309-residue protein sequence, read N- to C-terminus: ADP-L-glycero-D-manno-heptose-6-epimerase (309 aa).

NADP(+) contacts are provided by residues 10 to 11, 31 to 32, Lys38, Lys53, 75 to 79, and Asn92; these read FI, DN, and EGACS. Tyr140 (proton acceptor) is an active-site residue. Lys144 is a binding site for NADP(+). Asn169 is a substrate binding site. Positions 170 and 178 each coordinate NADP(+). Residue Lys178 is the Proton acceptor of the active site. Substrate is bound by residues Ser180, His187, 201 to 204, Arg209, and Tyr272; that span reads FEGS.

This sequence belongs to the NAD(P)-dependent epimerase/dehydratase family. HldD subfamily. In terms of assembly, homopentamer. NADP(+) serves as cofactor.

The catalysed reaction is ADP-D-glycero-beta-D-manno-heptose = ADP-L-glycero-beta-D-manno-heptose. The protein operates within nucleotide-sugar biosynthesis; ADP-L-glycero-beta-D-manno-heptose biosynthesis; ADP-L-glycero-beta-D-manno-heptose from D-glycero-beta-D-manno-heptose 7-phosphate: step 4/4. Its function is as follows. Catalyzes the interconversion between ADP-D-glycero-beta-D-manno-heptose and ADP-L-glycero-beta-D-manno-heptose via an epimerization at carbon 6 of the heptose. The protein is ADP-L-glycero-D-manno-heptose-6-epimerase of Enterobacter sp. (strain 638).